We begin with the raw amino-acid sequence, 474 residues long: Protein nucleotidyltransferase YdiU (474 aa).

8 residues coordinate ATP: Gly89, Gly91, Arg92, Lys112, Asp124, Gly125, Arg175, and Arg182. The active-site Proton acceptor is Asp256. Asn257 and Asp266 together coordinate Mg(2+). Residue Asp266 coordinates ATP.

Belongs to the SELO family. Requires Mg(2+) as cofactor. Mn(2+) is required as a cofactor.

It catalyses the reaction L-seryl-[protein] + ATP = 3-O-(5'-adenylyl)-L-seryl-[protein] + diphosphate. The catalysed reaction is L-threonyl-[protein] + ATP = 3-O-(5'-adenylyl)-L-threonyl-[protein] + diphosphate. The enzyme catalyses L-tyrosyl-[protein] + ATP = O-(5'-adenylyl)-L-tyrosyl-[protein] + diphosphate. It carries out the reaction L-histidyl-[protein] + UTP = N(tele)-(5'-uridylyl)-L-histidyl-[protein] + diphosphate. It catalyses the reaction L-seryl-[protein] + UTP = O-(5'-uridylyl)-L-seryl-[protein] + diphosphate. The catalysed reaction is L-tyrosyl-[protein] + UTP = O-(5'-uridylyl)-L-tyrosyl-[protein] + diphosphate. Its function is as follows. Nucleotidyltransferase involved in the post-translational modification of proteins. It can catalyze the addition of adenosine monophosphate (AMP) or uridine monophosphate (UMP) to a protein, resulting in modifications known as AMPylation and UMPylation. The protein is Protein nucleotidyltransferase YdiU of Corynebacterium glutamicum (strain ATCC 13032 / DSM 20300 / JCM 1318 / BCRC 11384 / CCUG 27702 / LMG 3730 / NBRC 12168 / NCIMB 10025 / NRRL B-2784 / 534).